Consider the following 716-residue polypeptide: Protein Hook homolog 2 (716 aa).

Positions 1–161 are required for localization to the centrosome and induction of aggresome formation; the sequence is MSVDKAELCG…ELMTKDTPDS (161 aa). A sufficient for interaction with microtubules region spans residues 1–546; that stretch reads MSVDKAELCG…LKRKLEDHLQ (546 aa). The Calponin-homology (CH) domain occupies 6–122; sequence AELCGSLLTW…KLLQLVLGCA (117 aa). Position 163 is a phosphoserine (Ser163). Coiled coils occupy residues 188–427 and 455–605; these read DHLQ…AQLQ and AELR…VDKA. Residues 533 to 716 form a required for localization to the centrosome and induction of aggresome formation region; the sequence is DPTLLKRKLE…ALSLRPTDKH (184 aa). Residues 582 to 716 form a sufficient for interaction with CNTRL region; it reads DSLQKKDADL…ALSLRPTDKH (135 aa).

The protein belongs to the hook family. Self-associates. Component of the FTS/Hook/FHIP complex (FHF complex), composed of AKTIP/FTS, FHIP1B, and one or more members of the Hook family of proteins HOOK1, HOOK2, and HOOK3. May interact directly with AKTIP/FTS, HOOK1 and HOOK3. Associates with several subunits of the homotypic vesicular sorting complex (the HOPS complex) including VPS16 and VPS41; these interactions may be indirect. Interacts with CNTRL. Interacts with microtubules. Interacts with ZC3H14. Interacts with LRGUK (via guanylate kinase-like domain). Interacts with CCDC181. Interacts with AP4M1; the interaction is direct, mediates the interaction between FTS-Hook-FHIP (FHF) complex and AP-4 and the perinuclear distribution of AP-4. Expressed in brain, cerebellum, kidney, liver and heart, with highest levels in heart and kidney (at protein level).

The protein localises to the cytoplasm. The protein resides in the cytoskeleton. It is found in the microtubule organizing center. It localises to the centrosome. Its subcellular location is the golgi apparatus. The protein localises to the trans-Golgi network. Component of the FTS/Hook/FHIP complex (FHF complex). The FHF complex may function to promote vesicle trafficking and/or fusion via the homotypic vesicular protein sorting complex (the HOPS complex). Contributes to the establishment and maintenance of centrosome function. May function in the positioning or formation of aggresomes, which are pericentriolar accumulations of misfolded proteins, proteasomes and chaperones. FHF complex promotes the distribution of AP-4 complex to the perinuclear area of the cell. The protein is Protein Hook homolog 2 (Hook2) of Mus musculus (Mouse).